A 435-amino-acid chain; its full sequence is 5-methylthioadenosine/S-adenosylhomocysteine deaminase (435 aa).

2 residues coordinate Zn(2+): His65 and His67. Substrate-binding residues include Glu94, Arg150, and His189. Zn(2+) is bound at residue His216. Substrate contacts are provided by Glu219 and Asp304. Asp304 is a Zn(2+) binding site.

Belongs to the metallo-dependent hydrolases superfamily. MTA/SAH deaminase family. Zn(2+) is required as a cofactor.

It catalyses the reaction S-adenosyl-L-homocysteine + H2O + H(+) = S-inosyl-L-homocysteine + NH4(+). The catalysed reaction is S-methyl-5'-thioadenosine + H2O + H(+) = S-methyl-5'-thioinosine + NH4(+). Functionally, catalyzes the deamination of 5-methylthioadenosine and S-adenosyl-L-homocysteine into 5-methylthioinosine and S-inosyl-L-homocysteine, respectively. Is also able to deaminate adenosine. The polypeptide is 5-methylthioadenosine/S-adenosylhomocysteine deaminase (Bacillus cereus (strain AH187)).